The chain runs to 180 residues: Large ribosomal subunit protein uL5 (180 aa).

This sequence belongs to the universal ribosomal protein uL5 family. In terms of assembly, part of the 50S ribosomal subunit; part of the 5S rRNA/L5/L18/L25 subcomplex. Contacts the 5S rRNA and the P site tRNA. Forms a bridge to the 30S subunit in the 70S ribosome.

Its function is as follows. This is one of the proteins that bind and probably mediate the attachment of the 5S RNA into the large ribosomal subunit, where it forms part of the central protuberance. In the 70S ribosome it contacts protein S13 of the 30S subunit (bridge B1b), connecting the 2 subunits; this bridge is implicated in subunit movement. Contacts the P site tRNA; the 5S rRNA and some of its associated proteins might help stabilize positioning of ribosome-bound tRNAs. This is Large ribosomal subunit protein uL5 from Mesoplasma florum (strain ATCC 33453 / NBRC 100688 / NCTC 11704 / L1) (Acholeplasma florum).